The primary structure comprises 1133 residues: MWSLLLLAALVGQGFALKNVFDMRIQCPHSVKFGETSVSGYTELPPLSLQEAEQLVPESSCNMDNHQSLSTINKLTKVIWRKKANQESANQNSFELMESEVSFKGLCMLKHRMVEESYRNRRSVICYDLACNSTFCKPTVYMIVPIHACNMMKSCLIGLGPYRVQVVYERTYCTTGILTEGKCFVPDKAVVSALKRGMYAIASIETICFFIHQKGNTYKIVTAITSAMGSKCNNTDTKVQGYYICIIGGNSAPVYAPAGEDFRAMEVFSGIITSPHGEDHDLPGEEIATYQISGQIEAKIPHTVSSKNLKLTAFAGIPSYSSTSILTASEDGRFIFSPGLFPNLNQSVCDNNALPLIWRGLIDLTGYYEAVHPCNVFCVLSGPGASCEAFSEGGIFNITSPMCLVSKQNRFRAAEQQISFVCQRVDMDIIVYCNGQKKTILTKTLVIGQCIYTITSLFSLLPGVAHSIAIELCVPGFHGWATAALLITFCFGWVLIPACTLAILLVLKFFANILHTSNQENRFKAILRKIKEEFEKTKGSMVCEICKYECETLKELKAHNLSCVQGECPYCFTHCEPTETAIQAHYKVCQATHRFREDLKKTVTPQNIGPGCYRTLNLFRYKSRCYILTMWTLLLIIESILWAASAAEIPLVPLWTDNAHGVGSVPMHTDLELDFSLPSSSRYTYKRHLTNPVNDQQSVSLHIEIESQGIGADVHHLGHWYDARLNLKTSFHCYGACTKYQYPWHTAKCHFEKDYEYENSWACNPPDCPGVGTGCTACGLYLDQLKPVGTAFKIISVRYSRKVCVQFGEEYLCKTIDMNDCFVTRHAKICIIGTVSKFSQGDTLLFLGPMEGGGIIFKHWCTSTCHFGDPGDVMGPKDKPFICPEFPGQFRKKCNFATTPVCEYDGNIISGYKKVLATIDSFQSFNTSNIHFTDERIEWRDPDGMLRDHINIVISKDIDFENLAENPCKVGLQAANIEGAWGSGVGFTLTCQVSLTECPTFLTSIRACDMAICYGAESVTLSRGQNTVKITGKGGHSGSSFKCCHGKECSLTGLQASAPHLDKVNGISELENEKVYDDGAPECGITCWFKKSGEWVMGIINGNWVVLIVLCVLLLFSLILLSILCPVRKHKKS.

Positions 1–17 (MWSLLLLAALVGQGFAL) are cleaved as a signal peptide. Topologically, residues 18-484 (KNVFDMRIQC…PGFHGWATAA (467 aa)) are lumenal. 11 cysteine pairs are disulfide-bonded: Cys-27-Cys-149, Cys-61-Cys-155, Cys-107-Cys-126, Cys-131-Cys-136, Cys-173-Cys-183, Cys-208-Cys-245, Cys-232-Cys-349, Cys-374-Cys-433, Cys-378-Cys-387, Cys-403-Cys-422, and Cys-450-Cys-473. Residue Asn-132 is glycosylated (N-linked (GlcNAc...) asparagine; by host). Asn-233 and Asn-345 each carry an N-linked (GlcNAc...) asparagine; by host glycan. Asn-397 carries N-linked (GlcNAc...) asparagine; by host glycosylation. A helical membrane pass occupies residues 485–504 (LLITFCFGWVLIPACTLAIL). Over 505–626 (LVLKFFANIL…NLFRYKSRCY (122 aa)) the chain is Cytoplasmic. Residues 514 to 531 (LHTSNQENRFKAILRKIK) form a binding to the ribonucleoprotein region. 2 consecutive CCHC-type zinc fingers follow at residues 543–563 (CEICKYECETLKELKAHNLSC) and 568–589 (CPYCFTHCEPTETAIQAHYKVC). 3 binding to the ribonucleoprotein regions span residues 586 to 603 (YKVCQATHRFREDLKKTV), 590 to 601 (QATHRFREDLKK), and 609 to 623 (GPGCYRTLNLFRYKS). The 24-residue stretch at 609–632 (GPGCYRTLNLFRYKSRCYILTMWT) folds into the ITAM domain. A YxxL motif is present at residues 613-616 (YRTL). The helical transmembrane segment at 627–647 (ILTMWTLLLIIESILWAASAA) threads the bilayer. Residues 648–1104 (EIPLVPLWTD…WVMGIINGNW (457 aa)) are Lumenal-facing. 8 cysteine pairs are disulfide-bonded: Cys-733-Cys-768, Cys-737-Cys-775, Cys-749-Cys-883, Cys-763-Cys-894, Cys-778-Cys-902, Cys-804-Cys-813, Cys-821-Cys-830, and Cys-861-Cys-865. The segment at 755–775 (YEYENSWACNPPDCPGVGTGC) is fusion loop. Asn-926 carries N-linked (GlcNAc...) asparagine; by host glycosylation. Intrachain disulfides connect Cys-968-Cys-998, Cys-991-Cys-1043, Cys-1008-Cys-1013, Cys-1044-Cys-1049, and Cys-1083-Cys-1087. A helical transmembrane segment spans residues 1105 to 1125 (VVLIVLCVLLLFSLILLSILC). The segment at 1120 to 1133 (LLSILCPVRKHKKS) is binding to the ribonucleoprotein. Over 1126 to 1133 (PVRKHKKS) the chain is Cytoplasmic.

It belongs to the hantavirus envelope glycoprotein family. As to quaternary structure, homodimer. Homotetramer; forms heterotetrameric Gn-Gc spikes in the pre-fusion conformation. Interacts (via C-terminus) with the nucleoprotein. Interacts with host TUFM; this interaction contributes to the virus-induced degradation of mitochondria by autophagy, which leads to degradation of host MAVS and inhibition of type I interferon (IFN) responses. Interacts with host MAP1LC3B; this interaction contributes to the virus-induced degradation of mitochondria by autophagy, which leads to degradation of host MAVS and inhibition of type I interferon (IFN) responses. Homodimer. Homotetramer; forms heterotetrameric Gn-Gc spikes in the pre-fusion conformation. Homotrimer; forms homotrimer in the post-fusion conformation at acidic pH. Interacts (via C-terminus) with the nucleoprotein. Envelope polyprotein precursor is quickly cleaved in vivo just after synthesis, presumably by host signal peptidase.

The protein resides in the virion membrane. It localises to the host cell surface. The protein localises to the host Golgi apparatus membrane. Its subcellular location is the host endoplasmic reticulum membrane. It is found in the host mitochondrion. Forms homotetramers with glycoprotein C at the surface of the virion. Attaches the virion to host cell receptors including integrin ITGAV/ITGB3. This attachment induces virion internalization predominantly through clathrin-dependent endocytosis. Mediates the assembly and budding of infectious virus particles through its interaction with the nucleocapsid protein and the viral genome. May dysregulate normal immune and endothelial cell responses through an ITAM motif. Translocates to mitochondria, binds to host TUFM and recruits MAP1LC3B. These interactions induce mitochondrial autophagy and therefore destruction of host MAVS leading to inhibition of type I interferon (IFN) responses. Concomitant breakdown of glycoprotein N is apparently prevented by the nucleoprotein that may inhibit Gn-stimulated autophagosome-lysosome fusion. Interacts with the viral genomic RNA. In terms of biological role, forms homotetramers with glycoprotein N at the surface of the virion. Attaches the virion to host cell receptors including integrin ITGAV/ITGB3. This attachment induces virion internalization predominantly through clathrin-dependent endocytosis. Class II fusion protein that promotes fusion of viral membrane with host endosomal membrane after endocytosis of the virion. The protein is Envelopment polyprotein (GP) of Homo sapiens (Human).